A 3674-amino-acid chain; its full sequence is Dystrophin (3674 aa).

The tract at residues 1-236 (MSEVSSDERE…YVTSLFQVLP (236 aa)) is actin-binding. 2 consecutive Calponin-homology (CH) domains span residues 11-115 (DVQK…LHWQ) and 130-236 (TNSE…QVLP). Positions 59–68 (PKEKGSTRVH) are ANK2- and ANK-3 binding. Over residues 306–318 (SDPTRSPFPSQRL) the composition is skewed to polar residues. A disordered region spans residues 306–325 (SDPTRSPFPSQRLESPEDKS). 24 Spectrin repeats span residues 335–443 (VNLD…NLHK), 444–552 (VLMD…LLQD), 555–663 (LKWQ…QISQ), 715–824 (EIRK…WLEY), 826–930 (NRII…ELQI), 939–1041 (RYQE…KLEE), 1044–1150 (AKLR…ALKG), 1153–1259 (DKTI…TLEE), 1262–1363 (ACWH…LLEQ), 1364–1459 (SIQS…LFQK), 1464–1564 (EQRL…QLEK), 1567–1672 (KLSR…LLLE), 1675–1774 (KHME…KASI), 1775–1870 (PLKE…KALE), 1873–1975 (HQWY…TVHE), 1988–2097 (EISY…KFDR), 2100–2204 (EKWR…RLEE), 2207–2314 (NILS…EIEA), 2315–2412 (HIKD…LRAK), 2464–2566 (FNRA…QLNE), 2569–2675 (KDST…VLEE), 2678–2791 (RLLQ…HLEA), 2797–2919 (KRLH…RKID), and 2924–3029 (RLQE…QLHE). The segment at 1411-1909 (SDLTSHEISL…PEPQDEKKIK (499 aa)) is interaction with SYNM. The WW domain maps to 3044-3077 (TSVQGPWERAISPNKVPYYINHETQTTCWDHPKM). Residues 3047–3397 (QGPWERAISP…TVLEGDNMET (351 aa)) form an interaction with SYNM region. The ZZ-type; degenerate zinc finger occupies 3297-3353 (KHQAKCNICKECPIIGFRYRSLKHFNYDICQSCFFSGRVAKGHKMHYPMVEYCTPTT). Zn(2+) is bound by residues Cys3302, Cys3305, Cys3326, and Cys3329. Residues 3455-3507 (DDEHLLIQHYCQSLNQDSPLSQPRSPAQILISLESEERGELERILADLEEENR) form a binds to SNTB1 region. Phosphoserine occurs at positions 3472, 3479, and 3489. Disordered stretches follow at residues 3517-3543 (KQQH…QSPR) and 3590-3674 (QAEA…EDTM). Composition is skewed to polar residues over residues 3596-3615 (NGTT…SSQP) and 3651-3662 (QLNNSFPSSRGR). Phosphoserine occurs at positions 3601, 3602, 3606, 3612, 3613, and 3655.

Interacts with SYNM. Interacts with the syntrophins SNTG1 and SNTG2. Interacts with KRT19. Component of the dystrophin-associated glycoprotein complex which is composed of three subcomplexes: a cytoplasmic complex comprised of DMD (or UTRN), DTNA and a number of syntrophins, such as SNTB1, SNTB2, SNTG1 and SNTG2, the transmembrane dystroglycan complex, and the sarcoglycan-sarcospan complex. Interacts with DAG1 (betaDAG1) with DMD; the interaction is inhibited by phosphorylation on the PPXY motif of DAG1. Interacts with SYNM; SNTA1 and SNTB1. Interacts with CMYA5. Directly interacts with ANK2 and ANK3; these interactions do not interfere with betaDAG1-binding and are necessary for proper localization in muscle cells. Identified in a dystroglycan complex that contains at least PRX, DRP2, UTRN, DMD and DAG1. Interacts with DTNB. Interacts with PGM5; the interaction is direct. Interacts with NOS1; localizes NOS1 to sarcolemma in muscle cells. In terms of tissue distribution, in the retina, expressed in the outer plexiform layer (OPL) and around the blood vessels. Also observed at the vitreal border of the retina corresponding to the inner limiting membrane (ILM). Presynaptically localized in cone pedicles and postsynaptically in bipolar cells (at protein level).

The protein localises to the cell membrane. Its subcellular location is the sarcolemma. It is found in the cytoplasm. It localises to the cytoskeleton. The protein resides in the postsynaptic cell membrane. Anchors the extracellular matrix to the cytoskeleton via F-actin. Ligand for dystroglycan. Component of the dystrophin-associated glycoprotein complex which accumulates at the neuromuscular junction (NMJ) and at a variety of synapses in the peripheral and central nervous systems and has a structural function in stabilizing the sarcolemma. Also implicated in signaling events and synaptic transmission. The sequence is that of Dystrophin from Sus scrofa (Pig).